Consider the following 117-residue polypeptide: Hemerythrin subunit beta (117 aa).

Fe cation is bound by residues His-24, His-53, Glu-57, His-72, His-76, His-105, and Asp-110.

This sequence belongs to the hemerythrin family. In terms of assembly, octamer composed of two types of chains: alpha and beta.

In terms of biological role, hemerythrin is a respiratory protein in blood cells of certain marine worms. The oxygen-binding site in each chain contains two iron atoms. In Lingula reevii (Inarticulated brachiopod), this protein is Hemerythrin subunit beta.